The primary structure comprises 137 residues: Seminal plasma sperm motility inhibitor (137 aa).

The N-terminal stretch at 1 to 21 (MKLGSAIPWALLLSTXTLVST) is a signal peptide. Cysteines 30 and 51 form a disulfide. The CUB domain occupies 30 to 131 (CGGFLKNYSG…SSFNVYFYGI (102 aa)). N36 carries an N-linked (GlcNAc...) asparagine glycan.

This sequence belongs to the spermadhesin family. As to expression, seminal plasma or sperm.

The protein localises to the secreted. Its function is as follows. Inhibitor of sperm motility. This is Seminal plasma sperm motility inhibitor (SPMI) from Sus scrofa (Pig).